Consider the following 152-residue polypeptide: Small ribosomal subunit protein uS13 (152 aa).

The protein belongs to the universal ribosomal protein uS13 family.

Its subcellular location is the cytoplasm. Its function is as follows. Located at the top of the head of the 40S subunit, it contacts several helices of the 18S rRNA. The sequence is that of Small ribosomal subunit protein uS13 (RPS18) from Branchiostoma belcheri (Amphioxus).